The following is a 94-amino-acid chain: Large ribosomal subunit protein bL25 (94 aa).

Belongs to the bacterial ribosomal protein bL25 family. Part of the 50S ribosomal subunit; part of the 5S rRNA/L5/L18/L25 subcomplex. Contacts the 5S rRNA. Binds to the 5S rRNA independently of L5 and L18.

In terms of biological role, this is one of the proteins that binds to the 5S RNA in the ribosome where it forms part of the central protuberance. In Escherichia coli (strain K12 / DH10B), this protein is Large ribosomal subunit protein bL25.